Consider the following 254-residue polypeptide: Geranylgeranylglyceryl phosphate synthase (254 aa).

Residues Asp28 and Ser57 each coordinate Mg(2+). Residues 176-182 (YLEAGSG), 207-208 (GG), and 229-230 (GT) contribute to the sn-glycerol 1-phosphate site.

It belongs to the GGGP/HepGP synthase family. Group II subfamily. It depends on Mg(2+) as a cofactor.

It localises to the cytoplasm. The catalysed reaction is sn-glycerol 1-phosphate + (2E,6E,10E)-geranylgeranyl diphosphate = sn-3-O-(geranylgeranyl)glycerol 1-phosphate + diphosphate. It functions in the pathway membrane lipid metabolism; glycerophospholipid metabolism. Functionally, prenyltransferase that catalyzes the transfer of the geranylgeranyl moiety of geranylgeranyl diphosphate (GGPP) to the C3 hydroxyl of sn-glycerol-1-phosphate (G1P). This reaction is the first ether-bond-formation step in the biosynthesis of archaeal membrane lipids. This is Geranylgeranylglyceryl phosphate synthase from Pyrococcus horikoshii (strain ATCC 700860 / DSM 12428 / JCM 9974 / NBRC 100139 / OT-3).